The primary structure comprises 90 residues: uncharacterized protein (90 aa).

This is an uncharacterized protein from Methanocaldococcus jannaschii (strain ATCC 43067 / DSM 2661 / JAL-1 / JCM 10045 / NBRC 100440) (Methanococcus jannaschii).